A 177-amino-acid polypeptide reads, in one-letter code: Cell division protein ZapC (177 aa).

The protein belongs to the ZapC family. As to quaternary structure, interacts directly with FtsZ.

The protein resides in the cytoplasm. Its function is as follows. Contributes to the efficiency of the cell division process by stabilizing the polymeric form of the cell division protein FtsZ. Acts by promoting interactions between FtsZ protofilaments and suppressing the GTPase activity of FtsZ. The chain is Cell division protein ZapC from Shewanella frigidimarina (strain NCIMB 400).